We begin with the raw amino-acid sequence, 335 residues long: DNA polymerase beta (335 aa).

Residue K41 forms a Glycyl lysine isopeptide (Lys-Gly) (interchain with G-Cter in ubiquitin) linkage. K60 lines the K(+) pocket. Position 60 (K60) interacts with Na(+). K61 participates in a covalent cross-link: Glycyl lysine isopeptide (Lys-Gly) (interchain with G-Cter in ubiquitin). K(+) contacts are provided by L62 and V65. 2 residues coordinate Na(+): L62 and V65. The active-site Nucleophile; Schiff-base intermediate with DNA; for 5'-dRP lyase activity is the K72. K72 carries the N6-acetyllysine modification. K81 is covalently cross-linked (Glycyl lysine isopeptide (Lys-Gly) (interchain with G-Cter in ubiquitin)). Position 83 is an omega-N-methylarginine; by PRMT6 (R83). K(+) is bound by residues T101, V103, and I106. T101, V103, and I106 together coordinate Na(+). R149 provides a ligand contact to dATP. A dCTP-binding site is contributed by R149. R149 is a binding site for dGTP. R149 lines the dTTP pocket. R152 is subject to Omega-N-methylarginine; by PRMT6. The dATP site is built by S180, R183, G189, and D190. DCTP is bound by residues S180, R183, G189, and D190. 5 residues coordinate dGTP: S180, R183, G189, D190, and D192. 4 residues coordinate dTTP: S180, R183, G189, and D190. The tract at residues R183–D192 is DNA-binding. Mg(2+) is bound by residues D190, D192, and D256.

Belongs to the DNA polymerase type-X family. Monomer. Binds single-stranded DNA (ssDNA). Interacts with APEX1, LIG1, LIG3, FEN1, PCNA and XRCC1. Interacts with HUWE1/ARF-BP1, STUB1/CHIP and USP47. Interacts with FAM168A. Mg(2+) is required as a cofactor. Post-translationally, methylation by PRMT6 stimulates the polymerase activity by enhancing DNA binding and processivity. Ubiquitinated at Lys-41, Lys-61 and Lys-81: monoubiquitinated by HUWE1/ARF-BP1. Monoubiquitinated protein is then the target of STUB1/CHIP, which catalyzes polyubiquitination from monoubiquitin, leading to degradation by the proteasome. USP47 mediates the deubiquitination of monoubiquitinated protein, preventing polyubiquitination by STUB1/CHIP and its subsequent degradation.

It is found in the nucleus. The protein resides in the cytoplasm. The catalysed reaction is DNA(n) + a 2'-deoxyribonucleoside 5'-triphosphate = DNA(n+1) + diphosphate. It catalyses the reaction a 5'-end 2'-deoxyribose-2'-deoxyribonucleotide-DNA = (2E,4S)-4-hydroxypenten-2-al-5-phosphate + a 5'-end 5'-phospho-2'-deoxyribonucleoside-DNA + H(+). The enzyme catalyses 2'-deoxyribonucleotide-(2'-deoxyribose 5'-phosphate)-2'-deoxyribonucleotide-DNA = a 3'-end 2'-deoxyribonucleotide-(2,3-dehydro-2,3-deoxyribose 5'-phosphate)-DNA + a 5'-end 5'-phospho-2'-deoxyribonucleoside-DNA + H(+). Its function is as follows. Repair polymerase that plays a key role in base-excision repair. During this process, the damaged base is excised by specific DNA glycosylases, the DNA backbone is nicked at the abasic site by an apurinic/apyrimidic (AP) endonuclease, and POLB removes 5'-deoxyribose-phosphate from the preincised AP site acting as a 5'-deoxyribose-phosphate lyase (5'-dRP lyase); through its DNA polymerase activity, it adds one nucleotide to the 3' end of the arising single-nucleotide gap. Conducts 'gap-filling' DNA synthesis in a stepwise distributive fashion rather than in a processive fashion as for other DNA polymerases. It is also able to cleave sugar-phosphate bonds 3' to an intact AP site, acting as an AP lyase. This Homo sapiens (Human) protein is DNA polymerase beta (POLB).